The sequence spans 230 residues: UPF0173 metal-dependent hydrolase Sca_1312 (230 aa).

This sequence belongs to the UPF0173 family.

The polypeptide is UPF0173 metal-dependent hydrolase Sca_1312 (Staphylococcus carnosus (strain TM300)).